Reading from the N-terminus, the 48-residue chain is ATP synthase protein 8 (48 aa).

The chain crosses the membrane as a helical span at residues 4–24 (LVPFFFVNQVVYAFVILTVLI).

It belongs to the ATPase protein 8 family. In terms of assembly, F-type ATPases have 2 components, CF(1) - the catalytic core - and CF(0) - the membrane proton channel.

Its subcellular location is the mitochondrion membrane. Its function is as follows. Mitochondrial membrane ATP synthase (F(1)F(0) ATP synthase or Complex V) produces ATP from ADP in the presence of a proton gradient across the membrane which is generated by electron transport complexes of the respiratory chain. F-type ATPases consist of two structural domains, F(1) - containing the extramembraneous catalytic core and F(0) - containing the membrane proton channel, linked together by a central stalk and a peripheral stalk. During catalysis, ATP synthesis in the catalytic domain of F(1) is coupled via a rotary mechanism of the central stalk subunits to proton translocation. Part of the complex F(0) domain. Minor subunit located with subunit a in the membrane. The chain is ATP synthase protein 8 (atp8) from Aspergillus amstelodami.